A 345-amino-acid chain; its full sequence is Heat-inducible transcription repressor HrcA (345 aa).

This sequence belongs to the HrcA family.

In terms of biological role, negative regulator of class I heat shock genes (grpE-dnaK-dnaJ and groELS operons). Prevents heat-shock induction of these operons. The protein is Heat-inducible transcription repressor HrcA of Zymomonas mobilis subsp. mobilis (strain ATCC 31821 / ZM4 / CP4).